Here is a 122-residue protein sequence, read N- to C-terminus: Small ribosomal subunit protein uS13 (122 aa).

Residues 95–122 (GLPVRGQKTKTNARTRKGPKRTVANKKK) are disordered.

The protein belongs to the universal ribosomal protein uS13 family. As to quaternary structure, part of the 30S ribosomal subunit. Forms a loose heterodimer with protein S19. Forms two bridges to the 50S subunit in the 70S ribosome.

In terms of biological role, located at the top of the head of the 30S subunit, it contacts several helices of the 16S rRNA. In the 70S ribosome it contacts the 23S rRNA (bridge B1a) and protein L5 of the 50S subunit (bridge B1b), connecting the 2 subunits; these bridges are implicated in subunit movement. Contacts the tRNAs in the A and P-sites. This is Small ribosomal subunit protein uS13 from Agathobacter rectalis (strain ATCC 33656 / DSM 3377 / JCM 17463 / KCTC 5835 / VPI 0990) (Eubacterium rectale).